The sequence spans 68 residues: Large ribosomal subunit protein bL35 (68 aa).

The segment covering 1 to 25 has biased composition (basic residues); the sequence is MGTKIKTHKGTKKRFRLSAKGKAMH. The segment at 1–43 is disordered; that stretch reads MGTKIKTHKGTKKRFRLSAKGKAMHRQSGTSHLAKGLSKKRRR.

Belongs to the bacterial ribosomal protein bL35 family.

In Rhodopirellula baltica (strain DSM 10527 / NCIMB 13988 / SH1), this protein is Large ribosomal subunit protein bL35.